A 483-amino-acid chain; its full sequence is Glutamate--tRNA ligase (483 aa).

Residues 11-21 carry the 'HIGH' region motif; sequence PSPTGLLHIGN. Positions 255-259 match the 'KMSKS' region motif; the sequence is KLSKR. Residue Lys-258 coordinates ATP.

The protein belongs to the class-I aminoacyl-tRNA synthetase family. Glutamate--tRNA ligase type 1 subfamily. In terms of assembly, monomer.

The protein localises to the cytoplasm. It catalyses the reaction tRNA(Glu) + L-glutamate + ATP = L-glutamyl-tRNA(Glu) + AMP + diphosphate. Its function is as follows. Catalyzes the attachment of glutamate to tRNA(Glu) in a two-step reaction: glutamate is first activated by ATP to form Glu-AMP and then transferred to the acceptor end of tRNA(Glu). In Lactococcus lactis subsp. cremoris (strain SK11), this protein is Glutamate--tRNA ligase.